Consider the following 570-residue polypeptide: Dihydroxy-acid dehydratase (570 aa).

A [2Fe-2S] cluster-binding site is contributed by cysteine 61. Mg(2+) is bound at residue aspartate 94. Cysteine 135 provides a ligand contact to [2Fe-2S] cluster. Residues aspartate 136 and lysine 137 each coordinate Mg(2+). Position 137 is an N6-carboxylysine (lysine 137). Residue cysteine 207 coordinates [2Fe-2S] cluster. Glutamate 459 contributes to the Mg(2+) binding site. The Proton acceptor role is filled by serine 485.

The protein belongs to the IlvD/Edd family. Homodimer. Requires [2Fe-2S] cluster as cofactor. Mg(2+) is required as a cofactor.

The catalysed reaction is (2R)-2,3-dihydroxy-3-methylbutanoate = 3-methyl-2-oxobutanoate + H2O. It catalyses the reaction (2R,3R)-2,3-dihydroxy-3-methylpentanoate = (S)-3-methyl-2-oxopentanoate + H2O. It participates in amino-acid biosynthesis; L-isoleucine biosynthesis; L-isoleucine from 2-oxobutanoate: step 3/4. It functions in the pathway amino-acid biosynthesis; L-valine biosynthesis; L-valine from pyruvate: step 3/4. Functions in the biosynthesis of branched-chain amino acids. Catalyzes the dehydration of (2R,3R)-2,3-dihydroxy-3-methylpentanoate (2,3-dihydroxy-3-methylvalerate) into 2-oxo-3-methylpentanoate (2-oxo-3-methylvalerate) and of (2R)-2,3-dihydroxy-3-methylbutanoate (2,3-dihydroxyisovalerate) into 2-oxo-3-methylbutanoate (2-oxoisovalerate), the penultimate precursor to L-isoleucine and L-valine, respectively. In Lactococcus lactis subsp. lactis (strain IL1403) (Streptococcus lactis), this protein is Dihydroxy-acid dehydratase.